Consider the following 921-residue polypeptide: MATPSAAFEALMNGVTSWDVPEDAVPCELLLIGEASFPVMVNDMGQVLIATSSYGRGRLVVVSHEDYLVEAQLTPFLLNAVGWLCSSPGAPIGVHPSLAPLAKILEGSGVDAKVEPEVKDSLGVYCIDAYNETMTEKLVKFMKRGGGLLIGGQAWDWANQGEDERVLFTFPGNLVTSVAGIYFTDNKGDTSFFKVSKKMPKIPVLVSCEDDLSEDREELLHGISELDISNSDCFPSQLLVHGALAFPLGLDSYHGCVIAAARYGRGRVVVTGHKVLFTVGKLGPFLLNAVRWLDGGRRGKVVVQTELRTLSGLLAVGGIDTSIEPNLTSDASVYCFEPVSEVGVKELQEFVAEGGGLFVGAQAWWWAFKNPGVSPLARFPGNLLLNPFGISITSQSLNPGPFRTPKAGIRTYHFRSTLAEFQVIMGRKRGNVEKGWLAKLGPDGAAFLQIPAEEIPAYMSVHRLLRKLLSRYRLPVATRENPVINDCCRGAMLSLATGLAHSGSDLSLLVPEIEDMYSSPYLRPSESPITVEVNCTNPGTRYCWMSTGLYIPGRQIIEVSLPEAAASADLKIQIGCHTDDLTRASKLFRGPLVINRCCLDKPTKSITCLWGGLLYIIVPQNSKLGSVPVTVKGAVHAPYYKLGETTLEEWKRHIQENPGPWGELATDNIILTVPTANLRTLENPEPLLRLWDEVMQAVARLGAEPFPLRLPQRIVADVQISVGWMHAGYPIMCHLESVQELINEKLIRTKGLWGPVHELGRNQQRQEWEFPPHTTEATCNLWCVYVHETVLGIPRSRANIALWPPVREKRVRIYLSKGPNVKNWNAWTALETYLQLQEAFGWEPFIRLFTEYRNQTNLPTDNVDKMNLWVKMFSHQVQKNLAPFFEAWAWPIQKEVTTSLAYLPEWKENIMKLYLLTQMPH.

In terms of domain architecture, Peptidase M60 spans 542 to 841; the sequence is YCWMSTGLYI…TYLQLQEAFG (300 aa).

It belongs to the TCAF family. Interacts with TRPM8 (via N-terminus and C-terminus domains); the interaction inhibits TRPM8 channel activity. Interacts with TRPV6.

It localises to the cell membrane. Positively regulates the plasma membrane cation channel TRPM8 activity. Involved in the recruitment of TRPM8 to the cell surface. Promotes prostate cancer cell migration inhibition in a TRPM8-dependent manner. This Pongo abelii (Sumatran orangutan) protein is TRPM8 channel-associated factor 1.